A 143-amino-acid chain; its full sequence is Transcriptional regulator MraZ (143 aa).

SpoVT-AbrB domains lie at 5–47 (EFEH…PLSE) and 76–119 (AVQC…NKAR).

This sequence belongs to the MraZ family. In terms of assembly, forms oligomers.

It localises to the cytoplasm. Its subcellular location is the nucleoid. In Pediococcus pentosaceus (strain ATCC 25745 / CCUG 21536 / LMG 10740 / 183-1w), this protein is Transcriptional regulator MraZ.